Here is a 255-residue protein sequence, read N- to C-terminus: Putative Myb family transcription factor At1g14600 (255 aa).

The HTH myb-type domain maps to 20 to 80 (RSPVPRLRWT…HLQMYRGSRI (61 aa)). Positions 51–76 (PKLVLKIMDVKGLTISHVKSHLQMYR) form a DNA-binding region, H-T-H motif. A disordered region spans residues 80–110 (ITLLGKPEESSSPSSRRRRRQDNEEDHLHDN).

It is found in the nucleus. Putative transcription factor. This chain is Putative Myb family transcription factor At1g14600, found in Arabidopsis thaliana (Mouse-ear cress).